A 481-amino-acid chain; its full sequence is Trigger factor (481 aa).

A PPIase FKBP-type domain is found at 174-261 (GDIAVVSFKG…LKDLKEKELP (88 aa)). Residues 435-481 (VKEKTTKASQASKTTKAKKTTTKTTKATKTATKTTKATKTQNKKEKK) form a disordered region. Over residues 456-474 (TKTTKATKTATKTTKATKT) the composition is skewed to low complexity.

Belongs to the FKBP-type PPIase family. Tig subfamily.

The protein localises to the cytoplasm. It catalyses the reaction [protein]-peptidylproline (omega=180) = [protein]-peptidylproline (omega=0). Its function is as follows. Involved in protein export. Acts as a chaperone by maintaining the newly synthesized protein in an open conformation. Functions as a peptidyl-prolyl cis-trans isomerase. This is Trigger factor from Prochlorococcus marinus (strain MIT 9312).